The primary structure comprises 570 residues: Double-stranded RNA-binding protein Staufen homolog 2 (570 aa).

The region spanning 8–75 (TPVCLVNELA…ANKALTESTL (68 aa)) is the DRBM 1 domain. Disordered stretches follow at residues 71 to 94 (TEST…PGSI) and 178 to 203 (ALQN…DDKD). Residues 83–94 (PKSNVNNNPGSI) show a composition bias toward polar residues. The region spanning 95–181 (TPTVELNGLA…AMKALQALQN (87 aa)) is the DRBM 2 domain. At serine 188 the chain carries Phosphoserine. A compositionally biased stretch (basic and acidic residues) spans 194–203 (SGKEMDDDKD). DRBM domains are found at residues 207–274 (SEIS…ELKK) and 307–375 (NPIS…QLGY). Short sequence motifs (nuclear localization signal) lie at residues 273 to 291 (KKLP…FKKR) and 373 to 412 (LGYK…PKGI). The interval 381 to 413 (LQDPLDKTGENKGWSGPKPGFPEPTNNTPKGIL) is disordered. The required for dendritic transport stretch occupies residues 381-570 (LQDPLDKTGE…QDCKKSKSAI (190 aa)). A Phosphoserine modification is found at serine 395. Phosphothreonine is present on threonine 405. A phosphoserine mark is found at serine 416, serine 426, serine 440, serine 455, and serine 492. Residues 545 to 570 (LREKADNNQAKPASISQDCKKSKSAI) form a disordered region. Residues 551–561 (NNQAKPASISQ) show a composition bias toward polar residues.

Interacts with microtubules. Isoform 2 and isoform 3 may also interact with ribosomes, and this association is independent of translation. Identified in a mRNP complex, at least composed of DHX9, DDX3X, ELAVL1, HNRNPU, IGF2BP1, ILF3, PABPC1, PCBP2, PTBP2, STAU1, STAU2, SYNCRIP and YBX1. Interacts with the exportin XPO5. This requires RNA and RAN bound to GTP. Interacts with TRIM71 (via NHL repeats) in an RNA-dependent manner. As to expression, expressed in brain and neurons, where isoform 2 and isoform 3 appear to be the most abundant. Expressed at the neuromuscular junction of the extensor digitorum longus, tibialis anterior and soleus muscles. Expression at neuromuscular junctions is most pronounced in slow-twitch muscle. Also weakly expressed in heart, kidney, ovary and testis.

Its subcellular location is the cytoplasm. The protein resides in the nucleus. It is found in the nucleolus. The protein localises to the endoplasmic reticulum. Its function is as follows. RNA-binding protein required for the microtubule-dependent transport of neuronal RNA from the cell body to the dendrite. As protein synthesis occurs within the dendrite, the localization of specific mRNAs to dendrites may be a prerequisite for neurite outgrowth and plasticity at sites distant from the cell body. This chain is Double-stranded RNA-binding protein Staufen homolog 2 (Stau2), found in Mus musculus (Mouse).